A 586-amino-acid chain; its full sequence is MSWLFGINKGPKGEGAGPPPPLPPAQPGAEGGGDRGLGDRPAPKDKWSNFDPTGLERAAKAARELEHSRYAKDALNLAQMQEQTLQLEQQSKLKEYEAAVEQLKSEQIRAQAEERRKTLSEETRQHQARAQYQDKLARQRYEDQLKQQQLLNEENLRKQEESVQKQEAMRRATVEREMELRHKNEMLRVEAEARARAKAERENADIIREQIRLKAAEHRQTVLESIRTAGTLFGEGFRAFVTDWDKVTATVAGLTLLAVGVYSAKNATLVAGRFIEARLGKPSLVRETSRITVLEALRHPIQVSRRLLSRPQDALEGVVLSPSLEARVRDIAIATRNTKKNRSLYRNILMYGPPGTGKTLFAKKLALHSGMDYAIMTGGDVAPMGREGVTAMHKLFDWANTSRRGLLLFVDEADAFLRKRATEKISEDLRATLNAFLYRTGQHSNKFMLVLASNQPEQFDWAINDRINEMVHFDLPGQEERERLVRMYFDKYVLKPATEGKQRLKLAQFDYGRKCSEVARLTEGMSGREIAQLAVSWQATAYASEDGVLTEAMMDTRVQDAVQQHQQKMCWLKAEGPGRGDEPSPS.

2 disordered regions span residues 1–55 and 111–134; these read MSWL…PTGL and QAEE…QYQD. Residue serine 2 is modified to N-acetylserine. Residues 2 to 50 are required for interaction with the inner surface of the mitochondrial outer membrane; the sequence is SWLFGINKGPKGEGAGPPPPLPPAQPGAEGGGDRGLGDRPAPKDKWSNF. The Mitochondrial intermembrane segment spans residues 2-246; the sequence is SWLFGINKGP…FRAFVTDWDK (245 aa). Over residues 17 to 26 the composition is skewed to pro residues; sequence GPPPPLPPAQ. Basic and acidic residues-rich tracts occupy residues 32-48 and 111-125; these read GGDR…DKWS and QAEE…ETRQ. Positions 86–219 form a coiled coil; it reads QLEQQSKLKE…QIRLKAAEHR (134 aa). Residues 247-264 traverse the membrane as a helical segment; sequence VTATVAGLTLLAVGVYSA. Residues 265 to 586 are Mitochondrial matrix-facing; the sequence is KNATLVAGRF…PGRGDEPSPS (322 aa). The S100B-binding stretch occupies residues 290–305; the sequence is RITVLEALRHPIQVSR. Serine 321 carries the post-translational modification Phosphoserine. Residue 352 to 359 participates in ATP binding; that stretch reads GPPGTGKT. Residue lysine 491 is modified to N6-acetyllysine.

The protein belongs to the AAA ATPase family. Can form homooligomers. Homodimer formation at the N-terminus may be regulated by ATP and is required for the interaction with the inner surface of the mitochondrial outer membrane and correct mitochondrial homeostasis. Interacts with components of the mitochondrial ribosome and with other proteins involved in mitochondrial RNA metabolism. May also interact with protein involved in lipid metabolism, including STARD9. May interact with FAM210A. Interacts with GADD45GIP1. Interacts with S100B in a Ca(+2)- and Zn(+2)-dependent manner; this interaction probably occurs in the cytosol prior to mitochondrial targeting. S100B could assist ATAD3A cytoplasmic processing, preventing aggregation and favoring mitochondrial localization. Interacts with HSP60/HSPD1. Forms heterooligomers with ATAD3B; this interaction may affect ATAD3A activity. Interacts with CLPB. Interacts with EIF2AK3/PERK; ATAD3A and EIF2S1/eIF-2-alpha occupy a common binding site within the cytoplasmic loop of EIF2AK3/PERK, leading to prevent EIF2AK3/PERK association with its substrate EIF2S1/eIF-2-alpha. In terms of tissue distribution, overexpressed in lung adenocarcinomas (at protein level).

Its subcellular location is the mitochondrion inner membrane. The protein localises to the mitochondrion matrix. It localises to the mitochondrion nucleoid. It catalyses the reaction ATP + H2O = ADP + phosphate + H(+). In terms of biological role, essential for mitochondrial network organization, mitochondrial metabolism and cell growth at organism and cellular level. May play an important role in mitochondrial protein synthesis. May also participate in mitochondrial DNA replication. May bind to mitochondrial DNA D-loops and contribute to nucleoid stability. Required for enhanced channeling of cholesterol for hormone-dependent steroidogenesis. Involved in mitochondrial-mediated antiviral innate immunity. Required to protect mitochondria from the PERK-mediated unfolded protein response: specifically inhibits the activity of EIF2AK3/PERK at mitochondria-endoplasmic reticulum contact sites, thereby providing a safe haven for mitochondrial protein translation during endoplasmic reticulum stress. Ability to inhibit EIF2AK3/PERK is independent of its ATPase activity. Also involved in the mitochondrial DNA damage response by promoting signaling between damaged genomes and the mitochondrial membrane, leading to activation of the integrated stress response (ISR). This is ATPase family AAA domain-containing protein 3A from Homo sapiens (Human).